The chain runs to 361 residues: UDP-N-acetylglucosamine--N-acetylmuramyl-(pentapeptide) pyrophosphoryl-undecaprenol N-acetylglucosamine transferase (361 aa).

Residues 11–13, Asn-124, Arg-162, Ser-193, and Gln-292 each bind UDP-N-acetyl-alpha-D-glucosamine; that span reads TGG.

Belongs to the glycosyltransferase 28 family. MurG subfamily.

It is found in the cell inner membrane. It catalyses the reaction di-trans,octa-cis-undecaprenyl diphospho-N-acetyl-alpha-D-muramoyl-L-alanyl-D-glutamyl-meso-2,6-diaminopimeloyl-D-alanyl-D-alanine + UDP-N-acetyl-alpha-D-glucosamine = di-trans,octa-cis-undecaprenyl diphospho-[N-acetyl-alpha-D-glucosaminyl-(1-&gt;4)]-N-acetyl-alpha-D-muramoyl-L-alanyl-D-glutamyl-meso-2,6-diaminopimeloyl-D-alanyl-D-alanine + UDP + H(+). Its pathway is cell wall biogenesis; peptidoglycan biosynthesis. Cell wall formation. Catalyzes the transfer of a GlcNAc subunit on undecaprenyl-pyrophosphoryl-MurNAc-pentapeptide (lipid intermediate I) to form undecaprenyl-pyrophosphoryl-MurNAc-(pentapeptide)GlcNAc (lipid intermediate II). In Elusimicrobium minutum (strain Pei191), this protein is UDP-N-acetylglucosamine--N-acetylmuramyl-(pentapeptide) pyrophosphoryl-undecaprenol N-acetylglucosamine transferase.